A 262-amino-acid polypeptide reads, in one-letter code: G patch domain-containing protein 11 (262 aa).

Composition is skewed to basic and acidic residues over residues 39 to 61, 114 to 127, and 136 to 165; these read LHKE…ESRE, EEVK…ELQN, and QHLE…DLRK. Disordered stretches follow at residues 39 to 71 and 88 to 169; these read LHKE…IGSQ and GLGK…SQRA. Residues 41–62 adopt a coiled-coil conformation; it reads KEKDIQNRQKSFKEQEKESREA. The 47-residue stretch at 70 to 116 folds into the G-patch domain; the sequence is SQNKGFALLQKMGYKAGQGLGKEGAGRVEPVPLNIKTDRGGIGMEEV.

It belongs to the GPATCH11 family.

The protein resides in the chromosome. It is found in the centromere. Its subcellular location is the kinetochore. This Danio rerio (Zebrafish) protein is G patch domain-containing protein 11 (gpatch11).